Consider the following 346-residue polypeptide: Biotin synthase (346 aa).

Polar residues predominate over residues 1–12 (MPDTATVSSESE). The interval 1–21 (MPDTATVSSESEFSGHAHVAA) is disordered. A Radical SAM core domain is found at 64-292 (NKVQLCSLLS…QSMVRLSAGR (229 aa)). [4Fe-4S] cluster-binding residues include C79, C83, and C86. The [2Fe-2S] cluster site is built by C123, C155, C215, and R287.

This sequence belongs to the radical SAM superfamily. Biotin synthase family. As to quaternary structure, homodimer. The cofactor is [4Fe-4S] cluster. [2Fe-2S] cluster is required as a cofactor.

It carries out the reaction (4R,5S)-dethiobiotin + (sulfur carrier)-SH + 2 reduced [2Fe-2S]-[ferredoxin] + 2 S-adenosyl-L-methionine = (sulfur carrier)-H + biotin + 2 5'-deoxyadenosine + 2 L-methionine + 2 oxidized [2Fe-2S]-[ferredoxin]. Its pathway is cofactor biosynthesis; biotin biosynthesis; biotin from 7,8-diaminononanoate: step 2/2. Its function is as follows. Catalyzes the conversion of dethiobiotin (DTB) to biotin by the insertion of a sulfur atom into dethiobiotin via a radical-based mechanism. The polypeptide is Biotin synthase (Myxococcus xanthus (strain DK1622)).